We begin with the raw amino-acid sequence, 416 residues long: Tyrosine--tRNA ligase (416 aa).

Tyr-41 serves as a coordination point for L-tyrosine. Positions 46 to 55 match the 'HIGH' region motif; sequence ATASSLHAGH. Positions 175 and 179 each coordinate L-tyrosine. Residues 235–239 carry the 'KMSKS' region motif; it reads KMGKT. Position 238 (Lys-238) interacts with ATP. The 68-residue stretch at 349–416 folds into the S4 RNA-binding domain; it reads LPVAKAFVDA…KKKHVLLKPV (68 aa).

This sequence belongs to the class-I aminoacyl-tRNA synthetase family. TyrS type 1 subfamily. In terms of assembly, homodimer.

Its subcellular location is the cytoplasm. The catalysed reaction is tRNA(Tyr) + L-tyrosine + ATP = L-tyrosyl-tRNA(Tyr) + AMP + diphosphate + H(+). In terms of biological role, catalyzes the attachment of tyrosine to tRNA(Tyr) in a two-step reaction: tyrosine is first activated by ATP to form Tyr-AMP and then transferred to the acceptor end of tRNA(Tyr). The chain is Tyrosine--tRNA ligase from Xanthobacter autotrophicus (strain ATCC BAA-1158 / Py2).